We begin with the raw amino-acid sequence, 214 residues long: 14-3-3 protein homolog 2 (214 aa).

It belongs to the 14-3-3 family.

This is 14-3-3 protein homolog 2 from Schistosoma mansoni (Blood fluke).